A 71-amino-acid polypeptide reads, in one-letter code: Bacteriocin carnobacteriocin-A (71 aa).

Residues 1 to 18 (MNNVKELSIKEMQQVTGG) constitute a propeptide that is removed on maturation. A disulfide bond links Cys40 and Cys69.

It is found in the secreted. In terms of biological role, has antibacterial activity. This Carnobacterium maltaromaticum (Carnobacterium piscicola) protein is Bacteriocin carnobacteriocin-A (cbnBA).